Reading from the N-terminus, the 1373-residue chain is DNA-directed RNA polymerase subunit beta (1373 aa).

Belongs to the RNA polymerase beta chain family. As to quaternary structure, the RNAP catalytic core consists of 2 alpha, 1 beta, 1 beta' and 1 omega subunit. When a sigma factor is associated with the core the holoenzyme is formed, which can initiate transcription.

The catalysed reaction is RNA(n) + a ribonucleoside 5'-triphosphate = RNA(n+1) + diphosphate. In terms of biological role, DNA-dependent RNA polymerase catalyzes the transcription of DNA into RNA using the four ribonucleoside triphosphates as substrates. In Rickettsia rickettsii (strain Iowa), this protein is DNA-directed RNA polymerase subunit beta.